Consider the following 274-residue polypeptide: Ribosomal RNA small subunit methyltransferase A (274 aa).

Residues N27, L29, G54, E75, D100, and N121 each contribute to the S-adenosyl-L-methionine site.

The protein belongs to the class I-like SAM-binding methyltransferase superfamily. rRNA adenine N(6)-methyltransferase family. RsmA subfamily.

Its subcellular location is the cytoplasm. It carries out the reaction adenosine(1518)/adenosine(1519) in 16S rRNA + 4 S-adenosyl-L-methionine = N(6)-dimethyladenosine(1518)/N(6)-dimethyladenosine(1519) in 16S rRNA + 4 S-adenosyl-L-homocysteine + 4 H(+). Specifically dimethylates two adjacent adenosines (A1518 and A1519) in the loop of a conserved hairpin near the 3'-end of 16S rRNA in the 30S particle. May play a critical role in biogenesis of 30S subunits. The protein is Ribosomal RNA small subunit methyltransferase A of Acinetobacter baylyi (strain ATCC 33305 / BD413 / ADP1).